A 375-amino-acid polypeptide reads, in one-letter code: Pectate lyase C (375 aa).

An N-terminal signal peptide occupies residues 1–22; that stretch reads MKSLITPITAGLLLALSQPLLA. A disulfide bond links C94 and C177. Residues D151, D153, E188, and D192 each contribute to the Ca(2+) site. R240 is a catalytic residue. An intrachain disulfide couples C351 to C374.

This sequence belongs to the polysaccharide lyase 1 family. PLADES subfamily. It depends on Ca(2+) as a cofactor.

It is found in the secreted. The catalysed reaction is Eliminative cleavage of (1-&gt;4)-alpha-D-galacturonan to give oligosaccharides with 4-deoxy-alpha-D-galact-4-enuronosyl groups at their non-reducing ends.. It participates in glycan metabolism; pectin degradation; 2-dehydro-3-deoxy-D-gluconate from pectin: step 2/5. Its function is as follows. Involved in maceration and soft-rotting of plant tissue. The polypeptide is Pectate lyase C (Dickeya chrysanthemi (Pectobacterium chrysanthemi)).